A 78-amino-acid chain; its full sequence is MARVCQVTGKRPMSGHNVSHANNKTKRRFLPNLQSRRFWLESENRWIRLRLTNAALRTVDKNGIDSVVADMRARGERV.

The interval 1-26 (MARVCQVTGKRPMSGHNVSHANNKTK) is disordered.

The protein belongs to the bacterial ribosomal protein bL28 family.

In Nitrosomonas europaea (strain ATCC 19718 / CIP 103999 / KCTC 2705 / NBRC 14298), this protein is Large ribosomal subunit protein bL28.